We begin with the raw amino-acid sequence, 90 residues long: Molybdopterin synthase sulfur carrier subunit (90 aa).

Gly90 is modified (1-thioglycine; alternate). The residue at position 90 (Gly90) is a Glycyl adenylate; alternate.

Belongs to the MoaD family. MOCS2A subfamily. Heterotetramer; composed of 2 small (Mocs2A) and 2 large (Mocs2B) subunits. C-terminal thiocarboxylation occurs in 2 steps, it is first acyl-adenylated (-COAMP) via the hesA/moeB/thiF part of MOCS3, then thiocarboxylated (-COSH) via the rhodanese domain of MOCS3.

It is found in the cytoplasm. It functions in the pathway cofactor biosynthesis; molybdopterin biosynthesis. Its function is as follows. Acts as a sulfur carrier required for molybdopterin biosynthesis. Component of the molybdopterin synthase complex that catalyzes the conversion of precursor Z into molybdopterin by mediating the incorporation of 2 sulfur atoms into precursor Z to generate a dithiolene group. In the complex, serves as sulfur donor by being thiocarboxylated (-COSH) at its C-terminus by MOCS3. After interaction with Mocs2B, the sulfur is then transferred to precursor Z to form molybdopterin. The protein is Molybdopterin synthase sulfur carrier subunit of Drosophila ananassae (Fruit fly).